The chain runs to 577 residues: Methionine--tRNA ligase (577 aa).

The 'HIGH' region signature appears at 21 to 31; sequence PYANGPLHVGH. Zn(2+) contacts are provided by Cys153, Cys156, Cys166, and Cys169. The short motif at 355–359 is the 'KMSKS' region element; it reads QMSTS. Thr358 provides a ligand contact to ATP.

The protein belongs to the class-I aminoacyl-tRNA synthetase family. MetG type 1 subfamily. Monomer. Requires Zn(2+) as cofactor.

The protein localises to the cytoplasm. The catalysed reaction is tRNA(Met) + L-methionine + ATP = L-methionyl-tRNA(Met) + AMP + diphosphate. Functionally, is required not only for elongation of protein synthesis but also for the initiation of all mRNA translation through initiator tRNA(fMet) aminoacylation. In Rubrobacter xylanophilus (strain DSM 9941 / JCM 11954 / NBRC 16129 / PRD-1), this protein is Methionine--tRNA ligase.